A 20-amino-acid chain; its full sequence is Pregnancy-associated glycoprotein 60H (20 aa).

The N-linked (GlcNAc...) asparagine glycan is linked to Asn-4.

This sequence belongs to the peptidase A1 family. As to expression, chorionic epithelium (trophectoderm) and placental cotyledons.

It localises to the secreted. Its subcellular location is the extracellular space. In Bison bonasus (European bison), this protein is Pregnancy-associated glycoprotein 60H.